The following is a 489-amino-acid chain: NF-kappa-B inhibitor cactus (489 aa).

The segment covering 1–26 (MPSPTKAAEAATKATATSDCSCSAAS) has biased composition (low complexity). Disordered regions lie at residues 1-138 (MPSP…SMRL) and 163-203 (NNLG…APPS). Ser-45 carries the phosphoserine; by PKC modification. A compositionally biased stretch (polar residues) spans 69–86 (NETSDSGFISGPQSSQIC). Residue Ser-135 is modified to Phosphoserine; by PKC. Polar residues predominate over residues 163 to 180 (NNLGQSSSTQITGRSKFQ). Residue Thr-174 is modified to Phosphothreonine; by PKC. Residues 181 to 203 (SSTASTANANPSGXGATSSAPPS) show a composition bias toward low complexity. ANK repeat units follow at residues 220 to 252 (DGDTPXHLACISGSVEVVAALIRMAPHPCLLNI), 256 to 285 (VAQTPLHLAALTAQPNIMRILLLAGAEVRD), 287 to 316 (HGNTALHLSCIAGEKQCVRALTEEFGATEI), 350 to 379 (DGERCVHLAAEAGHIDILRILVSHGADINA), and 384 to 413 (SGRTPLHIAIEGCNEDLANFLLDECEKLNL). Thr-308 bears the Phosphothreonine; by PKC mark. Phosphoserine; by PKC is present on Ser-384.

The protein resides in the cytoplasm. Functionally, involved in the formation of the dorsoventral pattern. It inhibits nuclear translocation of the dorsal morphogen in the dorsal region of the embryo. The sequence is that of NF-kappa-B inhibitor cactus (cact) from Drosophila yakuba (Fruit fly).